We begin with the raw amino-acid sequence, 201 residues long: Peptide deformylase (201 aa).

Residues 1–34 are disordered; the sequence is MSLNFAAMARQSERQASTVMVPKGEEQPESPKIH. Positions 23 to 32 are enriched in basic and acidic residues; it reads KGEEQPESPK. Positions 121 and 163 each coordinate Fe cation. The active site involves Glu164. His167 contacts Fe cation.

This sequence belongs to the polypeptide deformylase family. Fe(2+) is required as a cofactor.

It catalyses the reaction N-terminal N-formyl-L-methionyl-[peptide] + H2O = N-terminal L-methionyl-[peptide] + formate. In terms of biological role, removes the formyl group from the N-terminal Met of newly synthesized proteins. Requires at least a dipeptide for an efficient rate of reaction. N-terminal L-methionine is a prerequisite for activity but the enzyme has broad specificity at other positions. The chain is Peptide deformylase from Synechococcus sp. (strain RCC307).